The primary structure comprises 1170 residues: MARMSFVHLHVHSNYSLLDGASSLQRLVRTAKSLGQEALALTDHGNMFGALHFQKVCSAEGIKAIIGCELYVAPESRFDRSEHTIGRRYYHLIVLAKNETGYRNLMVLSSKAYIEGMYYKPRVDDELLAQHAEGLICLSSCLAGQLPYLLLQGRKREAEEHARKYRALFGVDNYFIEVQDHGLDEEKKVAPLLIELACRLGIPLVVTNDVHYAEQEDSVAQDILLCIGTKKNRSDPNRLKFKTDEFYLKSSEKMAQLFPHYPEMVLNTVRIAQRCNVRIPQPGPLLPLYQIPHEFSSKEHYIRHLVHRGLYDRYAVVSEEIKARADYELDVIVRMDFVGYFLIVWDFITWAKEHDIPVGPGRGSGASSIVAYALKITDIDPLRYKLLFERFMNPERISMPDFDIDFCFERRQEVIEYVRARYGNDNVGQIITFGTLKPKAAIRDVGRVLDIPLSEVLMITKLMPDDPKLTFKKAYESEQLAQMKQEPRYAELFQIAEKLEDTNRNTSLHAAGIVIGKTALTDYVPLYKDSKTGKISTQFGMDLIEDCGLVKMDFLGLKTLTLIQRTQNLVRRKGGKYTTFSISDISDQDPTTFSMLAEGKSAAVFQFESRGMQGILKRAKPSKMEDLIALNALYRPGPMAFIDQYIESKRDPGKIKYPDPCLEDILSETYGVIVYQEQVMQVAQRIAGFSLGEADILRRAMGKKKLAVMQEKKKEFAERAEKQGFDKKHAENIFEILIPFAGYGFNKSHATAYSVVAYQTAFLKANFPAEFMAANLSNEINSAEKLPLYMAEAEKMGLSIQKPDVNASEPYFSVCEGCIVYGLLGIKGLGEQVAFDVFDERIRNGPYTSFVEVLDRVPATSLNKKNAEIMIKAGCFDRFGVTRASLTAHLDDAMKYVARKKAVTSSRQASLFDETDLGECSEYTFPVMEEWSQRERLRIEKELMGYYISGHPLDEYRSVIGEKATLDLGHIENARSENKYLIVGVLNAIHPYTTKSGKNMAFGSFEDLHGSVDIVVFPVLWEEHRAQFLPETIMGLVGTVDFSKETPAFLVDSVIDLEQLRFAQVKTILAGSEHRRVSSGEKTPLQKRGVSQEVHIEVSSHVRAHAQFKSLYEILSAHTGGSGEVFLHMHVDDRTYVVYVPSCKVSATEVFAQQLKGNESFVQILKECVQ.

This sequence belongs to the DNA polymerase type-C family. DnaE subfamily. DNA polymerase III contains a core (composed of alpha, epsilon and theta chains) that associates with a tau subunit. This core dimerizes to form the PolIII' complex. PolIII' associates with the gamma complex (composed of gamma, delta, delta', psi and chi chains) and with the beta chain to form the complete DNA polymerase III complex.

The protein resides in the cytoplasm. The catalysed reaction is DNA(n) + a 2'-deoxyribonucleoside 5'-triphosphate = DNA(n+1) + diphosphate. Functionally, DNA polymerase III is a complex, multichain enzyme responsible for most of the replicative synthesis in bacteria. This DNA polymerase also exhibits 3' to 5' exonuclease activity. The alpha chain is the DNA polymerase. The chain is DNA polymerase III subunit alpha (dnaE) from Treponema pallidum (strain Nichols).